We begin with the raw amino-acid sequence, 210 residues long: Large ribosomal subunit protein bL17 (210 aa).

Residues 177-210 (TRSAQRPAFEQDAPESDSAPEAEAKTEEETASAN) form a disordered region.

Belongs to the bacterial ribosomal protein bL17 family. As to quaternary structure, part of the 50S ribosomal subunit. Contacts protein L32.

In Rhodopirellula baltica (strain DSM 10527 / NCIMB 13988 / SH1), this protein is Large ribosomal subunit protein bL17.